Reading from the N-terminus, the 435-residue chain is Deoxybrevianamide E synthase (435 aa).

The interval 1–28 (MTAPELRAPAGHPQEPPARSSPAQALSS) is disordered. Glu96 is a binding site for brevianamide F. 8 residues coordinate dimethylallyl diphosphate: Arg110, Lys195, Tyr197, Lys265, Tyr267, Tyr354, Tyr419, and Tyr423.

Belongs to the tryptophan dimethylallyltransferase family. Monomer.

It carries out the reaction brevianamide F + dimethylallyl diphosphate = deoxybrevianamide E + diphosphate. It functions in the pathway alkaloid biosynthesis. Functionally, deoxybrevianamide E synthase; part of the gene cluster that mediates the biosynthesis of notoamide, a fungal indole alkaloid that belongs to a family of natural products containing a characteristic bicyclo[2.2.2]diazaoctane core. The first step of notoamide biosynthesis involves coupling of L-proline and L-tryptophan by the bimodular NRPS notE', to produce cyclo-L-tryptophan-L-proline called brevianamide F. The reverse prenyltransferase notF' then acts as a deoxybrevianamide E synthase and converts brevianamide F to deoxybrevianamide E via reverse prenylation at C-2 of the indole ring leading to the bicyclo[2.2.2]diazaoctane core. Deoxybrevianamide E is further hydroxylated at C-6 of the indole ring, likely catalyzed by the cytochrome P450 monooxygenase notG', to yield 6-hydroxy-deoxybrevianamide E. 6-hydroxy-deoxybrevianamide E is a specific substrate of the prenyltransferase notC' for normal prenylation at C-7 to produce 6-hydroxy-7-prenyl-deoxybrevianamide, also called notoamide S. As the proposed pivotal branching point in notoamide biosynthesis, notoamide S can be diverted to notoamide E through an oxidative pyran ring closure putatively catalyzed by either notH' cytochrome P450 monooxygenase or the notD' FAD-linked oxidoreductase. This step would be followed by an indole 2,3-epoxidation-initiated pinacol-like rearrangement catalyzed by the notB' FAD-dependent monooxygenase leading to the formation of notoamide C and notoamide D. On the other hand notoamide S is converted to notoamide T by notH' (or notD'), a bifunctional oxidase that also functions as the intramolecular Diels-Alderase responsible for generation of (-)-notoamide T. To generate antipodal (+)-notoaminide T, notH (or notD) in Aspergillus strain MF297-2 is expected to catalyze a Diels-Alder reaction leading to the opposite stereochemistry. The remaining oxidoreductase notD' (or notH') likely catalyzes the oxidative pyran ring formation to yield (-)-stephacidin A. The FAD-dependent monooxygenase notI' is highly similar to notB' and is predicted to catalyze a similar conversion from (-)-stephacidin A to (+)-notoamide B via the 2,3-epoxidation of (-)-stephacidin A followed by a pinacol-type rearrangement. Finally, it remains unclear which enzyme could be responsible for the final hydroxylation steps leading to notoamide A and sclerotiamide. This chain is Deoxybrevianamide E synthase, found in Aspergillus versicolor.